The sequence spans 376 residues: Putative glutamate--cysteine ligase 2-1 (376 aa).

Belongs to the glutamate--cysteine ligase type 2 family. YbdK subfamily.

The catalysed reaction is L-cysteine + L-glutamate + ATP = gamma-L-glutamyl-L-cysteine + ADP + phosphate + H(+). ATP-dependent carboxylate-amine ligase which exhibits weak glutamate--cysteine ligase activity. The protein is Putative glutamate--cysteine ligase 2-1 of Mycolicibacterium smegmatis (strain ATCC 700084 / mc(2)155) (Mycobacterium smegmatis).